The sequence spans 615 residues: uncharacterized protein (615 aa).

Residue Asp403 is the Proton acceptor of the active site. The active-site Proton donor is Glu406.

The protein belongs to the glycosyl hydrolase 15 family.

This is an uncharacterized protein from Methanocaldococcus jannaschii (strain ATCC 43067 / DSM 2661 / JAL-1 / JCM 10045 / NBRC 100440) (Methanococcus jannaschii).